The following is a 247-amino-acid chain: Coproheme decarboxylase (247 aa).

Residues Arg-129, Tyr-143 to Lys-147, His-170, Gln-183, and Ser-221 each bind Fe-coproporphyrin III. Tyr-143 is an active-site residue.

Belongs to the ChdC family. Type 1 subfamily. It depends on Fe-coproporphyrin III as a cofactor.

It catalyses the reaction Fe-coproporphyrin III + 2 H2O2 + 2 H(+) = heme b + 2 CO2 + 4 H2O. The enzyme catalyses Fe-coproporphyrin III + H2O2 + H(+) = harderoheme III + CO2 + 2 H2O. The catalysed reaction is harderoheme III + H2O2 + H(+) = heme b + CO2 + 2 H2O. The protein operates within porphyrin-containing compound metabolism; protoheme biosynthesis. In terms of biological role, involved in coproporphyrin-dependent heme b biosynthesis. Catalyzes the decarboxylation of Fe-coproporphyrin III (coproheme) to heme b (protoheme IX), the last step of the pathway. The reaction occurs in a stepwise manner with a three-propionate intermediate. In Bacillus cytotoxicus (strain DSM 22905 / CIP 110041 / 391-98 / NVH 391-98), this protein is Coproheme decarboxylase.